The following is a 337-amino-acid chain: Protoheme IX farnesyltransferase (337 aa).

Positions 1–17 (MPFSISKDTVSNQTTHV) are enriched in polar residues. The disordered stretch occupies residues 1 to 41 (MPFSISKDTVSNQTTHVATAPASQRPDPVETKVEQEQGRPR). Residues 27–41 (DPVETKVEQEQGRPR) are compositionally biased toward basic and acidic residues. Helical transmembrane passes span 59-79 (IIEL…HGVP), 81-101 (LGLV…ANVF), 130-150 (SALI…GFGA), 153-173 (LSAA…SMLL), 196-216 (WTAV…IVFW), 250-270 (VAIQ…VLWP), 271-291 (VAHM…VFIV), and 311-331 (PMGL…AIAV).

This sequence belongs to the UbiA prenyltransferase family. Protoheme IX farnesyltransferase subfamily.

The protein localises to the cell membrane. It catalyses the reaction heme b + (2E,6E)-farnesyl diphosphate + H2O = Fe(II)-heme o + diphosphate. The protein operates within porphyrin-containing compound metabolism; heme O biosynthesis; heme O from protoheme: step 1/1. Converts heme B (protoheme IX) to heme O by substitution of the vinyl group on carbon 2 of heme B porphyrin ring with a hydroxyethyl farnesyl side group. This chain is Protoheme IX farnesyltransferase, found in Cutibacterium acnes (strain DSM 16379 / KPA171202) (Propionibacterium acnes).